A 281-amino-acid polypeptide reads, in one-letter code: 2,3,4,5-tetrahydropyridine-2,6-dicarboxylate N-succinyltransferase (281 aa).

Substrate is bound by residues Arg108 and Asp145.

It belongs to the transferase hexapeptide repeat family. As to quaternary structure, homotrimer.

It localises to the cytoplasm. It catalyses the reaction (S)-2,3,4,5-tetrahydrodipicolinate + succinyl-CoA + H2O = (S)-2-succinylamino-6-oxoheptanedioate + CoA. It participates in amino-acid biosynthesis; L-lysine biosynthesis via DAP pathway; LL-2,6-diaminopimelate from (S)-tetrahydrodipicolinate (succinylase route): step 1/3. The chain is 2,3,4,5-tetrahydropyridine-2,6-dicarboxylate N-succinyltransferase from Nitrobacter winogradskyi (strain ATCC 25391 / DSM 10237 / CIP 104748 / NCIMB 11846 / Nb-255).